Reading from the N-terminus, the 297-residue chain is MARSILHMLTPLKHMSPFDVNMAIDAGFETLIPYTGVDLTDVVSLTQDSIFSRAPQDGVRTGIFIGGKNAELALDMVDRAKKAFVPPFVNHVFADPAGSFTTGAAMVAEVNRALKARFSTDLKGKRIVIFGGAGVVAYVAAVIGALEGAQTVLVGHDGEERVSKIAFTMKWRFGIDVGAVDGTLPEARRAAITDADVILSAGPAGVSILTAEDLESAPKLLVASDVNAVPPAGIAGIDVNAVDVPLPTGKGVGIGALAVGNVKYQTQCRMFRKMLEAQEPLCLDFRDAYKLAVEIAG.

This sequence to M.extorquens MtdA. Homohexamer.

The protein localises to the cytoplasm. The catalysed reaction is 5,10-methylenetetrahydromethanopterin + NAD(+) = 5,10-methenyl-5,6,7,8-tetrahydromethanopterin + NADH. The enzyme catalyses 5,10-methylenetetrahydromethanopterin + NADP(+) = 5,10-methenyl-5,6,7,8-tetrahydromethanopterin + NADPH. It participates in one-carbon metabolism; formaldehyde degradation; formate from formaldehyde (H(4)MPT route): step 2/5. Catalyzes the dehydrogenation of methylene-H(4)MPT. In Methylorubrum extorquens (strain ATCC 14718 / DSM 1338 / JCM 2805 / NCIMB 9133 / AM1) (Methylobacterium extorquens), this protein is NAD(P)-dependent methylenetetrahydromethanopterin dehydrogenase (mtdB).